Here is a 644-residue protein sequence, read N- to C-terminus: Low affinity sulfate transporter 3 (644 aa).

Residues 1 to 19 (MSSLGTEQFSERSQWVLNS) are compositionally biased toward polar residues. The segment at 1-20 (MSSLGTEQFSERSQWVLNSP) is disordered. The next 13 helical transmembrane spans lie at 50 to 70 (AVSF…YSAT), 76 to 96 (LLSG…YANL), 99 to 119 (LDPQ…ALMG), 124 to 144 (IAIG…PKVI), 156 to 176 (LVFT…VLRL), 179 to 199 (LVDF…AIVI), 242 to 262 (PLNF…RFIG), 268 to 288 (FFWL…LIVF), 328 to 348 (IGLI…RSFA), 394 to 414 (CKTA…LELF), 418 to 438 (LYYT…PGLI), 455 to 475 (LACL…GLLI), and 518 to 538 (PGIL…AGFV). The 125-residue stretch at 511-635 (YPMAVTTPGI…LTVAEAVDAC (125 aa)) folds into the STAS domain.

This sequence belongs to the SLC26A/SulP transporter (TC 2.A.53) family.

The protein localises to the membrane. In terms of biological role, low-affinity H(+)/sulfate cotransporter which may be involved in the internal transport of sulfate between cellular or subcellular compartments within the plant. The sequence is that of Low affinity sulfate transporter 3 (ST3) from Stylosanthes hamata (Caribbean stylo).